The primary structure comprises 213 residues: FMN-dependent NADH:quinone oxidoreductase 1 (213 aa).

Position 18-20 (18-20) interacts with FMN; sequence SVS.

The protein belongs to the azoreductase type 1 family. In terms of assembly, homodimer. Requires FMN as cofactor.

The catalysed reaction is 2 a quinone + NADH + H(+) = 2 a 1,4-benzosemiquinone + NAD(+). It catalyses the reaction N,N-dimethyl-1,4-phenylenediamine + anthranilate + 2 NAD(+) = 2-(4-dimethylaminophenyl)diazenylbenzoate + 2 NADH + 2 H(+). In terms of biological role, quinone reductase that provides resistance to thiol-specific stress caused by electrophilic quinones. Its function is as follows. Also exhibits azoreductase activity. Catalyzes the reductive cleavage of the azo bond in aromatic azo compounds to the corresponding amines. This Bacillus cereus (strain ATCC 10987 / NRS 248) protein is FMN-dependent NADH:quinone oxidoreductase 1.